The chain runs to 327 residues: Transaldolase (327 aa).

Lys132 (schiff-base intermediate with substrate) is an active-site residue.

Belongs to the transaldolase family. Type 1 subfamily. Homodimer.

It is found in the cytoplasm. The enzyme catalyses D-sedoheptulose 7-phosphate + D-glyceraldehyde 3-phosphate = D-erythrose 4-phosphate + beta-D-fructose 6-phosphate. It participates in carbohydrate degradation; pentose phosphate pathway; D-glyceraldehyde 3-phosphate and beta-D-fructose 6-phosphate from D-ribose 5-phosphate and D-xylulose 5-phosphate (non-oxidative stage): step 2/3. Functionally, transaldolase is important for the balance of metabolites in the pentose-phosphate pathway. The protein is Transaldolase of Chlamydia caviae (strain ATCC VR-813 / DSM 19441 / 03DC25 / GPIC) (Chlamydophila caviae).